The primary structure comprises 257 residues: 1-(5-phosphoribosyl)-5-[(5-phosphoribosylamino)methylideneamino] imidazole-4-carboxamide isomerase (257 aa).

Catalysis depends on D8, which acts as the Proton acceptor. D129 functions as the Proton donor in the catalytic mechanism.

The protein belongs to the HisA/HisF family.

It localises to the cytoplasm. The enzyme catalyses 1-(5-phospho-beta-D-ribosyl)-5-[(5-phospho-beta-D-ribosylamino)methylideneamino]imidazole-4-carboxamide = 5-[(5-phospho-1-deoxy-D-ribulos-1-ylimino)methylamino]-1-(5-phospho-beta-D-ribosyl)imidazole-4-carboxamide. It participates in amino-acid biosynthesis; L-histidine biosynthesis; L-histidine from 5-phospho-alpha-D-ribose 1-diphosphate: step 4/9. The polypeptide is 1-(5-phosphoribosyl)-5-[(5-phosphoribosylamino)methylideneamino] imidazole-4-carboxamide isomerase (Trichodesmium erythraeum (strain IMS101)).